A 230-amino-acid chain; its full sequence is Ribonuclease 3 (230 aa).

The RNase III domain occupies methionine 1 to glycine 134. Residue glutamate 47 coordinates Mg(2+). The active site involves aspartate 51. Residues aspartate 120 and glutamate 123 each coordinate Mg(2+). Glutamate 123 is a catalytic residue. One can recognise a DRBM domain in the interval aspartate 160–glutamate 229.

The protein belongs to the ribonuclease III family. As to quaternary structure, homodimer. Mg(2+) serves as cofactor.

It localises to the cytoplasm. It catalyses the reaction Endonucleolytic cleavage to 5'-phosphomonoester.. Digests double-stranded RNA. Involved in the processing of primary rRNA transcript to yield the immediate precursors to the large and small rRNAs (23S and 16S). Processes some mRNAs, and tRNAs when they are encoded in the rRNA operon. Processes pre-crRNA and tracrRNA of type II CRISPR loci if present in the organism. The sequence is that of Ribonuclease 3 from Streptococcus pyogenes serotype M49 (strain NZ131).